The chain runs to 196 residues: Peroxynitrite isomerase (196 aa).

Positions G46–G52 match the GXWXGXG motif. A heme b-binding site is contributed by H186.

Belongs to the nitrobindin family. In terms of assembly, homodimer. Requires heme b as cofactor.

The catalysed reaction is peroxynitrite = nitrate. It participates in nitrogen metabolism. Functionally, heme-binding protein able to scavenge peroxynitrite and to protect free L-tyrosine against peroxynitrite-mediated nitration, by acting as a peroxynitrite isomerase that converts peroxynitrite to nitrate. Therefore, this protein likely plays a role in peroxynitrite sensing and in the detoxification of reactive nitrogen and oxygen species (RNS and ROS, respectively). Is able to bind nitric oxide (NO) in vitro, but may act as a sensor of peroxynitrite levels in vivo. The sequence is that of Peroxynitrite isomerase from Salinispora tropica (strain ATCC BAA-916 / DSM 44818 / JCM 13857 / NBRC 105044 / CNB-440).